Consider the following 301-residue polypeptide: Glycine--tRNA ligase alpha subunit (301 aa).

The protein belongs to the class-II aminoacyl-tRNA synthetase family. In terms of assembly, tetramer of two alpha and two beta subunits.

The protein localises to the cytoplasm. The catalysed reaction is tRNA(Gly) + glycine + ATP = glycyl-tRNA(Gly) + AMP + diphosphate. The protein is Glycine--tRNA ligase alpha subunit of Campylobacter hominis (strain ATCC BAA-381 / DSM 21671 / CCUG 45161 / LMG 19568 / NCTC 13146 / CH001A).